The following is a 439-amino-acid chain: Dolichyl-diphosphooligosaccharide--protein glycosyltransferase 48 kDa subunit (439 aa).

The signal sequence occupies residues 1 to 26; that stretch reads MEPSTAARAWALFWLLPPLLGAVCAS. Residues 27-410 are Lumenal-facing; the sequence is GPRTLVLLDN…YERFIPSAYP (384 aa). Residues 411-430 traverse the membrane as a helical segment; that stretch reads YYASAFSMMLGLFIFSIVFL. Residues 431 to 439 are Cytoplasmic-facing; the sequence is HMKEKEKSD.

This sequence belongs to the DDOST 48 kDa subunit family. In terms of assembly, component of the oligosaccharyltransferase (OST) complex. OST exists in two different complex forms which contain common core subunits RPN1, RPN2, OST48, OST4, DAD1 and TMEM258, either STT3A or STT3B as catalytic subunits, and form-specific accessory subunits. STT3A complex assembly occurs through the formation of 3 subcomplexes. Subcomplex 1 contains RPN1 and TMEM258, subcomplex 2 contains the STT3A-specific subunits STT3A, DC2/OSTC, and KCP2 as well as the core subunit OST4, and subcomplex 3 contains RPN2, DAD1, and OST48. The STT3A complex can form stable complexes with the Sec61 complex or with both the Sec61 and TRAP complexes. Interacts with SMIM22.

It localises to the endoplasmic reticulum membrane. The protein operates within protein modification; protein glycosylation. In terms of biological role, subunit of the oligosaccharyl transferase (OST) complex that catalyzes the initial transfer of a defined glycan (Glc(3)Man(9)GlcNAc(2) in eukaryotes) from the lipid carrier dolichol-pyrophosphate to an asparagine residue within an Asn-X-Ser/Thr consensus motif in nascent polypeptide chains, the first step in protein N-glycosylation. N-glycosylation occurs cotranslationally and the complex associates with the Sec61 complex at the channel-forming translocon complex that mediates protein translocation across the endoplasmic reticulum (ER). All subunits are required for a maximal enzyme activity. Required for the assembly of both SST3A- and SS3B-containing OST complexes. The polypeptide is Dolichyl-diphosphooligosaccharide--protein glycosyltransferase 48 kDa subunit (Pongo abelii (Sumatran orangutan)).